We begin with the raw amino-acid sequence, 222 residues long: Endonuclease V (222 aa).

2 residues coordinate Mg(2+): Asp-34 and Asp-102.

Belongs to the endonuclease V family. Mg(2+) is required as a cofactor.

It is found in the cytoplasm. The catalysed reaction is Endonucleolytic cleavage at apurinic or apyrimidinic sites to products with a 5'-phosphate.. Functionally, DNA repair enzyme involved in the repair of deaminated bases. Selectively cleaves double-stranded DNA at the second phosphodiester bond 3' to a deoxyinosine leaving behind the intact lesion on the nicked DNA. In Photorhabdus laumondii subsp. laumondii (strain DSM 15139 / CIP 105565 / TT01) (Photorhabdus luminescens subsp. laumondii), this protein is Endonuclease V.